Consider the following 197-residue polypeptide: Protein SYM1 (197 aa).

The next 4 membrane-spanning stretches (helical) occupy residues 20-40, 55-75, 97-117, and 137-157; these read AIMTGALFGIGDVSAQLLFPT, AVIYGSLIFSFIGDKWYKILN, VDQLAFAPLGLPFYFTCMSIM, and LLTNWAVWPLFQAINFSVVPL.

It belongs to the peroxisomal membrane protein PXMP2/4 family.

It is found in the mitochondrion inner membrane. Its function is as follows. May be involved in cellular response to stress. Required to maintain mitochondrial DNA (mtDNA) integrity and stability. Required for ethanol metabolism and tolerance during heat shock. In Saccharomyces cerevisiae (strain ATCC 204508 / S288c) (Baker's yeast), this protein is Protein SYM1 (SYM1).